The primary structure comprises 442 residues: D-serine dehydratase 1 (442 aa).

Lys-118 is modified (N6-(pyridoxal phosphate)lysine).

This sequence belongs to the serine/threonine dehydratase family. DsdA subfamily. Monomer. Pyridoxal 5'-phosphate is required as a cofactor.

The enzyme catalyses D-serine = pyruvate + NH4(+). The polypeptide is D-serine dehydratase 1 (Escherichia coli (strain UTI89 / UPEC)).